The sequence spans 837 residues: A disintegrin and metalloproteinase with thrombospondin motifs 4 (837 aa).

A signal peptide spans 1-51 (MSQTGSHPGRGLAGRWLWGAQPCLLLPIVPLSWLVWLLLLLLASLLPSARL). Residues 52–212 (ASPLPREEEI…PSPRPRRAKR (161 aa)) constitute a propeptide that is removed on maturation. Asn68 is a glycosylation site (N-linked (GlcNAc...) asparagine). Positions 192–199 (PMCNVKAP) match the Cysteine switch motif. Zn(2+) is bound at residue Cys194. Residues 218–428 (RFVETLVVAD…GYGHCLLDKP (211 aa)) enclose the Peptidase M12B domain. Disulfide bonds link Cys293/Cys345, Cys322/Cys327, Cys339/Cys423, Cys377/Cys407, Cys449/Cys472, Cys460/Cys482, Cys467/Cys501, Cys495/Cys506, Cys532/Cys569, Cys536/Cys574, and Cys547/Cys559. Position 361 (His361) interacts with Zn(2+). Glu362 is a catalytic residue. Zn(2+) is bound by residues His365 and His371. One can recognise a Disintegrin domain in the interval 437–519 (TFPGKDYDAD…DQLQDFNIPQ (83 aa)). The region spanning 520–575 (AGGWGPWGPWGDCSRTCGGGVQFSSRDCTRPVPRNGGKYCEGRRTRFRSCNTEDCP) is the TSP type-1 domain. Residues 686–837 (SKQSGSFRKF…LRRRPWAGRK (152 aa)) form a spacer region.

As to quaternary structure, interacts with SRPX2. It depends on Zn(2+) as a cofactor. In terms of processing, the precursor is cleaved by a furin endopeptidase. Glycosylated. Can be O-fucosylated by POFUT2 on a serine or a threonine residue found within the consensus sequence C1-X(2)-(S/T)-C2-G of the TSP type-1 repeat domains where C1 and C2 are the first and second cysteine residue of the repeat, respectively. Fucosylated repeats can then be further glycosylated by the addition of a beta-1,3-glucose residue by the glucosyltransferase, B3GALTL. Fucosylation mediates the efficient secretion of ADAMTS family members. Can also be C-glycosylated with one or two mannose molecules on tryptophan residues within the consensus sequence W-X-X-W of the TPRs, and N-glycosylated. These other glycosylations can also facilitate secretion. In terms of tissue distribution, expressed in brain, lung and heart. Expressed at very low level in placenta and skeletal muscles. Isoform 2: Detected in osteoarthritic synovium.

Its subcellular location is the secreted. The protein localises to the extracellular space. The protein resides in the extracellular matrix. It catalyses the reaction Glutamyl endopeptidase. Bonds cleaved include 370-Thr-Glu-Gly-Glu-|-Ala-Arg-Gly-Ser-377 in the interglobular domain of mammalian aggrecan.. Its function is as follows. Cleaves aggrecan, a cartilage proteoglycan, at the '392-Glu-|-Ala-393' site and may be involved in its turnover. Also cleaves COMP. May play an important role in the destruction of aggrecan in arthritic diseases. Could be a critical factor in the exacerbation of neurodegeneration in Alzheimer disease. This Homo sapiens (Human) protein is A disintegrin and metalloproteinase with thrombospondin motifs 4 (ADAMTS4).